Here is a 203-residue protein sequence, read N- to C-terminus: 3-isopropylmalate dehydratase small subunit (203 aa).

Belongs to the LeuD family. LeuD type 1 subfamily. In terms of assembly, heterodimer of LeuC and LeuD.

It carries out the reaction (2R,3S)-3-isopropylmalate = (2S)-2-isopropylmalate. Its pathway is amino-acid biosynthesis; L-leucine biosynthesis; L-leucine from 3-methyl-2-oxobutanoate: step 2/4. Catalyzes the isomerization between 2-isopropylmalate and 3-isopropylmalate, via the formation of 2-isopropylmaleate. The sequence is that of 3-isopropylmalate dehydratase small subunit from Phenylobacterium zucineum (strain HLK1).